The chain runs to 184 residues: Large ribosomal subunit protein bL17 (184 aa).

A disordered region spans residues 126–184; the sequence is TRAARAAASKQTADEAQVEETPAEEVTEETAAEETTEAAQADEAPAEEAPVEEKKDEEK. Over residues 141-161 the composition is skewed to acidic residues; the sequence is AQVEETPAEEVTEETAAEETT.

The protein belongs to the bacterial ribosomal protein bL17 family. In terms of assembly, part of the 50S ribosomal subunit. Contacts protein L32.

The polypeptide is Large ribosomal subunit protein bL17 (Corynebacterium efficiens (strain DSM 44549 / YS-314 / AJ 12310 / JCM 11189 / NBRC 100395)).